A 972-amino-acid polypeptide reads, in one-letter code: 116 kDa U5 small nuclear ribonucleoprotein component (972 aa).

Positions 1–53 (MDTDLYDEFGNYIGPELDSDDEDDELGRESKELDELEDDDDDDDMGDHDEDHP) are disordered. 2 stretches are compositionally biased toward acidic residues: residues 17–26 (LDSDDEDDEL) and 34–48 (DELE…MGDH). One can recognise a tr-type G domain in the interval 127-409 (ELIRNVTLCG…GIHLTKEELK (283 aa)). GTP-binding positions include 136 to 143 (GHLHHGKT), 204 to 208 (DTPGH), and 258 to 261 (NKID).

It belongs to the TRAFAC class translation factor GTPase superfamily. Classic translation factor GTPase family. EF-G/EF-2 subfamily. As to quaternary structure, component of the U5 snRNP and the U4/U6-U5 tri-snRNP complex, a building block of the spliceosome. Component of the pre-catalytic, catalytic and post-catalytic spliceosome complexes. Component of the minor spliceosome, which splices U12-type introns.

The protein resides in the nucleus. Its function is as follows. Required for pre-mRNA splicing as component of the spliceosome, including pre-catalytic, catalytic and post-catalytic spliceosomal complexes. Component of the U5 snRNP and the U4/U6-U5 tri-snRNP complex, a building block of the spliceosome. As a component of the minor spliceosome, involved in the splicing of U12-type introns in pre-mRNAs. This is 116 kDa U5 small nuclear ribonucleoprotein component (EFTUD2) from Gallus gallus (Chicken).